The sequence spans 213 residues: Ras-related protein Rab-4B (213 aa).

A2 carries the N-acetylalanine modification. Positions 18, 19, 20, 21, 22, and 23 each coordinate GDP. 9 residues coordinate GTP: G18, T19, G20, K21, S22, C23, S37, H39, and T40. S22 provides a ligand contact to Mg(2+). The short motif at H39–E44 is the Switch 1 element. Mg(2+) contacts are provided by T40 and D63. The short motif at A65–T74 is the Switch 2 element. G66 serves as a coordination point for GTP. The residue at position 67 (Q67) is a 5-glutamyl serotonin. The GDP site is built by N121, K122, D124, A152, and L153. 5 residues coordinate GTP: N121, K122, D124, A152, and L153. Residues S185 and S193 each carry the phosphoserine modification. Residues C211 and C213 are each lipidated (S-geranylgeranyl cysteine). Position 213 is a cysteine methyl ester (C213).

Belongs to the small GTPase superfamily. Rab family. Interacts (GTP-bound form) with RUFY1; the interaction allows endosomal tethering and fusion. Requires Mg(2+) as cofactor. In terms of processing, serotonylation of Gln-67 by TGM2 during activation and aggregation of platelets leads to constitutive activation of GTPase activity.

It is found in the cell membrane. The protein resides in the early endosome membrane. It carries out the reaction GTP + H2O = GDP + phosphate + H(+). Regulated by guanine nucleotide exchange factors (GEFs) which promote the exchange of bound GDP for free GTP. Regulated by GTPase activating proteins (GAPs) which increase the GTP hydrolysis activity. Inhibited by GDP dissociation inhibitors (GDIs). Functionally, the small GTPases Rab are key regulators of intracellular membrane trafficking, from the formation of transport vesicles to their fusion with membranes. Rabs cycle between an inactive GDP-bound form and an active GTP-bound form that is able to recruit to membranes different set of downstream effectors directly responsible for vesicle formation, movement, tethering and fusion. RAB4B mediates endosomal tethering and fusion through the interaction with RUFY1 and RAB14. Acts as a regulator of platelet alpha-granule release during activation and aggregation of platelets. The chain is Ras-related protein Rab-4B from Homo sapiens (Human).